The chain runs to 469 residues: MNPNQKIITIGSVSLTIATVCFLMQIAILATTVTLHFKQHECDSPASNQVMPCEPIIIERNITEIVYLNNTTIEKEICPEVVEYRNWSKPQCQITGFAPFSKDNSIRLSAGGDIWVTREPYVSCDPGKCYQFALGQGTTLDNKHSNGTIHDRIPHRTLLMNELGVPFHLGTKQVCVAWSSSSCHDGKAWLHVCVTGDDRNATASFIYDGRLVDSIGSWSQNILRTQESECVCINGTCTVVMTDGSASGRADTRILFIKEGKIVHISPLSGSAQHIEECSCYPRYPDVRCICRDNWKGSNRPVIDINMEDYSIDSSYVCSGLVGDTPRNDDSSSNSNCRDPNNERGNPGVKGWAFDNGDDVWMGRTINKDSRSGYETFKVIGGWSTPNSKSQVNRQVIVDNNNWSGYSGIFSVEGKSCINRCFYVELIRGRPQETRVWWTSNSIVVFCGTSGTYGTGSWPDGANINFMPI.

The Intravirion segment spans residues 1–6 (MNPNQK). A helical transmembrane segment spans residues 7-29 (IITIGSVSLTIATVCFLMQIAIL). Residues 11 to 33 (GSVSLTIATVCFLMQIAILATTV) are involved in apical transport and lipid raft association. Residues 30 to 469 (ATTVTLHFKQ…DGANINFMPI (440 aa)) lie on the Virion surface side of the membrane. The hypervariable stalk region stretch occupies residues 36–88 (HFKQHECDSPASNQVMPCEPIIIERNITEIVYLNNTTIEKEICPEVVEYRNWS). Residues N61, N69, N70, and N86 are each glycosylated (N-linked (GlcNAc...) asparagine; by host). The interval 91-469 (QCQITGFAPF…DGANINFMPI (379 aa)) is head of neuraminidase. 8 disulfides stabilise this stretch: C92–C417, C124–C129, C183–C230, C232–C237, C278–C291, C280–C289, C318–C337, and C421–C447. R118 contributes to the substrate binding site. N146 carries an N-linked (GlcNAc...) asparagine; by host glycan. D151 (proton donor/acceptor) is an active-site residue. R152 serves as a coordination point for substrate. N-linked (GlcNAc...) asparagine; by host glycans are attached at residues N200 and N234. 276-277 (EE) provides a ligand contact to substrate. R292 serves as a coordination point for substrate. Ca(2+)-binding residues include D293, G297, and D324. The tract at residues 325 to 349 (TPRNDDSSSNSNCRDPNNERGNPGV) is disordered. A substrate-binding site is contributed by R371. The N-linked (GlcNAc...) asparagine; by host glycan is linked to N402. The active-site Nucleophile is the Y406.

It belongs to the glycosyl hydrolase 34 family. Homotetramer. Ca(2+) is required as a cofactor. N-glycosylated.

It localises to the virion membrane. Its subcellular location is the host apical cell membrane. The catalysed reaction is Hydrolysis of alpha-(2-&gt;3)-, alpha-(2-&gt;6)-, alpha-(2-&gt;8)- glycosidic linkages of terminal sialic acid residues in oligosaccharides, glycoproteins, glycolipids, colominic acid and synthetic substrates.. With respect to regulation, inhibited by the neuraminidase inhibitors zanamivir (Relenza) and oseltamivir (Tamiflu). These drugs interfere with the release of progeny virus from infected cells and are effective against all influenza strains. Resistance to neuraminidase inhibitors is quite rare. Catalyzes the removal of terminal sialic acid residues from viral and cellular glycoconjugates. Cleaves off the terminal sialic acids on the glycosylated HA during virus budding to facilitate virus release. Additionally helps virus spread through the circulation by further removing sialic acids from the cell surface. These cleavages prevent self-aggregation and ensure the efficient spread of the progeny virus from cell to cell. Otherwise, infection would be limited to one round of replication. Described as a receptor-destroying enzyme because it cleaves a terminal sialic acid from the cellular receptors. May facilitate viral invasion of the upper airways by cleaving the sialic acid moieties on the mucin of the airway epithelial cells. Likely to plays a role in the budding process through its association with lipid rafts during intracellular transport. May additionally display a raft-association independent effect on budding. Plays a role in the determination of host range restriction on replication and virulence. Sialidase activity in late endosome/lysosome traffic seems to enhance virus replication. This Aves (Human) protein is Neuraminidase.